Consider the following 137-residue polypeptide: Ribonuclease VapC3 (137 aa).

The region spanning 12–129 is the PINc domain; sequence VVVDASAMVD…LTTDERLARA (118 aa). Mg(2+) contacts are provided by D15 and D105.

Belongs to the PINc/VapC protein family. It depends on Mg(2+) as a cofactor.

In terms of biological role, toxic component of a type II toxin-antitoxin (TA) system. An RNase. Its toxic effect is neutralized by coexpression with cognate antitoxin VapB3. This is Ribonuclease VapC3 from Mycobacterium tuberculosis (strain CDC 1551 / Oshkosh).